A 682-amino-acid chain; its full sequence is MKPSHFTEKRFMKKVLGLFLVVVMLASVGVLPTSKVQAAGTTVTSMEYFSPADGPVISKSGVGKASYGFVMPKFNGGSATWNDVYSDVGVNVKVGNNWVDIDQAGGYIYNQNWGHWSDGGFNGYWFTLSATTEIQLYSKANGVKLEYQLVFQNINKTTITAMNPTQGPQITASFTGGAGFTYPTFNNDSAVTYEAVADDLKVYVKPVNSSSWIDIDNNAASGWIYDHNFGQFTDGGGGYWFNVTESINVKLESKTSSANLVYTITFNEPTRNSYVITPYEGTTFTADANGSIGIPLPKIDGGAPIAKELGNFVYQININGQWVDLSNSSQSKFAYSANGYNNMSDANQWGYWADYIYGLWFQPIQENMQIRIGYPLNGQAGGNIGNNFVNYTFIGNPNAPRPDVSDQEDISIGTPTDPAIAGMNLIWQDEFNGTTLDTSKWNYETGYYLNNDPATWGWGNAELQHYTNSTQNVYVQDGKLNIKAMNDSKSFPQDPNRYAQYSSGKINTKDKLSLKYGRVDFRAKLPTGDGVWPALWMLPKDSVYGTWAASGEIDVMEARGRLPGSVSGTIHFGGQWPVNQSSGGDYHFPEGQTFANDYHVYSVVWEEDNIKWYVDGKFFYKVTNQQWYSTAAPNNPNAPFDEPFYLIMNLAVGGNFDGGRTPNASDIPATMQVDYVRVYKEQ.

An N-terminal signal peptide occupies residues 1-38 (MKPSHFTEKRFMKKVLGLFLVVVMLASVGVLPTSKVQA). The 292-residue stretch at 391 to 682 (YTFIGNPNAP…VDYVRVYKEQ (292 aa)) folds into the GH16 domain. E552 acts as the Nucleophile in catalysis. E557 (proton donor) is an active-site residue.

The protein belongs to the glycosyl hydrolase 16 family.

The protein localises to the secreted. The enzyme catalyses Hydrolysis of (1-&gt;3)-beta-D-glucosidic linkages in (1-&gt;3)-beta-D-glucans.. Functionally, lysis of cellular walls containing beta-1,3-glucans. Implicated in the defense against fungal pathogens. In Niallia circulans (Bacillus circulans), this protein is Glucan endo-1,3-beta-glucosidase A1 (glcA).